A 61-amino-acid chain; its full sequence is Three-finger hemachatoxin (61 aa).

4 disulfide bridges follow: Cys-3/Cys-22, Cys-15/Cys-39, Cys-43/Cys-54, and Cys-55/Cys-60.

This sequence belongs to the three-finger toxin family. Short-chain subfamily. Type IB cytotoxin sub-subfamily. In terms of tissue distribution, expressed by the venom gland.

It localises to the secreted. This protein lyses red blood cells and has cardiotoxic and hypotensive activities. The protein is Three-finger hemachatoxin of Hemachatus haemachatus (Rinkhals).